A 254-amino-acid chain; its full sequence is MRTPLLAGNWKMYKTTGEARELVEGLLHGLGDVGDRKVLVCPPFTALQTVHDLVQGTPIALGAQDVYIEPQGAFTGAISPVMLRDLGCAYVIVGHSERRAIFGEGDELIGKKVRAALAHDLTPILCVGETKPQRDAGHAETVVVAQVRAALTGMTPEQIGRIVIAYEPVWAIGTGDTATPADAQAMHETIRRILGDMAGSDTAATINILYGGSVKPDNIDDLMAQPDIDGALVGGASLKADSFLRIVHFLSPQE.

Residue 9–11 (NWK) coordinates substrate. The Electrophile role is filled by histidine 95. Glutamate 167 functions as the Proton acceptor in the catalytic mechanism. Substrate is bound by residues glycine 173, serine 213, and 234 to 235 (GG).

Belongs to the triosephosphate isomerase family. As to quaternary structure, homodimer.

Its subcellular location is the cytoplasm. It catalyses the reaction D-glyceraldehyde 3-phosphate = dihydroxyacetone phosphate. It participates in carbohydrate biosynthesis; gluconeogenesis. It functions in the pathway carbohydrate degradation; glycolysis; D-glyceraldehyde 3-phosphate from glycerone phosphate: step 1/1. Functionally, involved in the gluconeogenesis. Catalyzes stereospecifically the conversion of dihydroxyacetone phosphate (DHAP) to D-glyceraldehyde-3-phosphate (G3P). The sequence is that of Triosephosphate isomerase from Roseiflexus castenholzii (strain DSM 13941 / HLO8).